We begin with the raw amino-acid sequence, 303 residues long: MSIKDEKIAVLFGGVSQEREVSLNSGAAVTEALKSLGYNVEGIDTKDFPIEKLKEKGIQRVFNILHGGIGENGVLQGALEQMGIPYTGCGVMASAVTLDKFRTKLMWQAVGLPTADMVVVRRGEAVDSEQIIAKLGLPVFVKPSSEGSSVGVTKVKTVEQLLPAVEEALKFDSIVLVEAFLAGKEYSVPVLDGQVLPAVQIIPEGEFYDYHAKYISDNTQYLVPALSDDRQAEVAELVKAAYEVVGCRGWSRIDVMEDANGHFNLVEVNTCPGMTSHSIFPKSAATVGIPFEKLVERVLELSA.

The 197-residue stretch at 104–300 folds into the ATP-grasp domain; the sequence is KLMWQAVGLP…FEKLVERVLE (197 aa). Residue 132-187 coordinates ATP; that stretch reads IAKLGLPVFVKPSSEGSSVGVTKVKTVEQLLPAVEEALKFDSIVLVEAFLAGKEYS. Residues aspartate 254, glutamate 267, and asparagine 269 each contribute to the Mg(2+) site.

The protein belongs to the D-alanine--D-alanine ligase family. It depends on Mg(2+) as a cofactor. Requires Mn(2+) as cofactor.

It localises to the cytoplasm. The catalysed reaction is 2 D-alanine + ATP = D-alanyl-D-alanine + ADP + phosphate + H(+). Its pathway is cell wall biogenesis; peptidoglycan biosynthesis. Functionally, cell wall formation. The protein is D-alanine--D-alanine ligase of Actinobacillus pleuropneumoniae serotype 5b (strain L20).